Consider the following 610-residue polypeptide: Phosphomethylpyrimidine synthase (610 aa).

Substrate-binding positions include Asn-216, Met-245, Tyr-274, His-310, 330–332 (SRG), 371–374 (DGLR), and Glu-410. Position 414 (His-414) interacts with Zn(2+). Substrate is bound at residue Tyr-437. His-478 contacts Zn(2+). Residues Cys-558, Cys-561, and Cys-566 each coordinate [4Fe-4S] cluster.

The protein belongs to the ThiC family. Homodimer. It depends on [4Fe-4S] cluster as a cofactor.

It catalyses the reaction 5-amino-1-(5-phospho-beta-D-ribosyl)imidazole + S-adenosyl-L-methionine = 4-amino-2-methyl-5-(phosphooxymethyl)pyrimidine + CO + 5'-deoxyadenosine + formate + L-methionine + 3 H(+). The protein operates within cofactor biosynthesis; thiamine diphosphate biosynthesis. Functionally, catalyzes the synthesis of the hydroxymethylpyrimidine phosphate (HMP-P) moiety of thiamine from aminoimidazole ribotide (AIR) in a radical S-adenosyl-L-methionine (SAM)-dependent reaction. The polypeptide is Phosphomethylpyrimidine synthase (Allorhizobium ampelinum (strain ATCC BAA-846 / DSM 112012 / S4) (Agrobacterium vitis (strain S4))).